The following is a 261-amino-acid chain: Ribosomal RNA small subunit methyltransferase A (261 aa).

S-adenosyl-L-methionine is bound by residues Asn11, Leu13, Gly38, Glu59, Asp84, and Ser106.

Belongs to the class I-like SAM-binding methyltransferase superfamily. rRNA adenine N(6)-methyltransferase family. RsmA subfamily.

It localises to the cytoplasm. It carries out the reaction adenosine(1518)/adenosine(1519) in 16S rRNA + 4 S-adenosyl-L-methionine = N(6)-dimethyladenosine(1518)/N(6)-dimethyladenosine(1519) in 16S rRNA + 4 S-adenosyl-L-homocysteine + 4 H(+). In terms of biological role, specifically dimethylates two adjacent adenosines (A1518 and A1519) in the loop of a conserved hairpin near the 3'-end of 16S rRNA in the 30S particle. May play a critical role in biogenesis of 30S subunits. The polypeptide is Ribosomal RNA small subunit methyltransferase A (Wigglesworthia glossinidia brevipalpis).